The following is a 256-amino-acid chain: Imidazole glycerol phosphate synthase subunit HisF (256 aa).

Active-site residues include D13 and D132.

The protein belongs to the HisA/HisF family. As to quaternary structure, heterodimer of HisH and HisF.

It localises to the cytoplasm. The enzyme catalyses 5-[(5-phospho-1-deoxy-D-ribulos-1-ylimino)methylamino]-1-(5-phospho-beta-D-ribosyl)imidazole-4-carboxamide + L-glutamine = D-erythro-1-(imidazol-4-yl)glycerol 3-phosphate + 5-amino-1-(5-phospho-beta-D-ribosyl)imidazole-4-carboxamide + L-glutamate + H(+). It functions in the pathway amino-acid biosynthesis; L-histidine biosynthesis; L-histidine from 5-phospho-alpha-D-ribose 1-diphosphate: step 5/9. IGPS catalyzes the conversion of PRFAR and glutamine to IGP, AICAR and glutamate. The HisF subunit catalyzes the cyclization activity that produces IGP and AICAR from PRFAR using the ammonia provided by the HisH subunit. This Leptospira interrogans serogroup Icterohaemorrhagiae serovar copenhageni (strain Fiocruz L1-130) protein is Imidazole glycerol phosphate synthase subunit HisF.